The chain runs to 123 residues: Highly acidic elicitin 20 (123 aa).

Positions 1–20 (MQFTALFAATAVALVGSVSA) are cleaved as a signal peptide. 3 disulfide bridges follow: Cys-23–Cys-91, Cys-47–Cys-76, and Cys-71–Cys-115.

It belongs to the elicitin family.

The protein resides in the secreted. Its function is as follows. Induces local and distal defense responses (incompatible hypersensitive reaction) in plants from the solanaceae and cruciferae families. Elicits leaf necrosis and causes the accumulation of pathogenesis-related proteins. Might interact with the lipidic molecules of the plasma membrane. This is Highly acidic elicitin 20 (B20) from Phytophthora cryptogea.